The primary structure comprises 237 residues: Mitochondrial inner membrane protease atp23 (237 aa).

The segment covering 1–19 (MSDSQPGSTSSTGGKSDSG) has biased composition (low complexity). Positions 1–23 (MSDSQPGSTSSTGGKSDSGYIPG) are disordered. His-136 contributes to the a divalent metal cation binding site. Glu-137 is a catalytic residue. His-140 is an a divalent metal cation binding site.

The protein belongs to the peptidase M76 family.

The protein resides in the mitochondrion inner membrane. Has a dual role in the assembly of mitochondrial ATPase. Acts as a protease that removes N-terminal residues of mitochondrial ATPase CF(0) subunit 6 at the intermembrane space side. Also involved in the correct assembly of the membrane-embedded ATPase CF(0) particle, probably mediating association of subunit 6 with the subunit 9 ring. This chain is Mitochondrial inner membrane protease atp23 (atp23), found in Neosartorya fischeri (strain ATCC 1020 / DSM 3700 / CBS 544.65 / FGSC A1164 / JCM 1740 / NRRL 181 / WB 181) (Aspergillus fischerianus).